The primary structure comprises 305 residues: Ferrochelatase (305 aa).

Histidine 182 and glutamate 262 together coordinate Fe cation.

It belongs to the ferrochelatase family.

Its subcellular location is the cytoplasm. It catalyses the reaction heme b + 2 H(+) = protoporphyrin IX + Fe(2+). The protein operates within porphyrin-containing compound metabolism; protoheme biosynthesis; protoheme from protoporphyrin-IX: step 1/1. Its function is as follows. Catalyzes the ferrous insertion into protoporphyrin IX. The sequence is that of Ferrochelatase from Herpetosiphon aurantiacus (strain ATCC 23779 / DSM 785 / 114-95).